The chain runs to 253 residues: Phosphate import ATP-binding protein PstB (253 aa).

Residues 7 to 248 (IKVRDLNLYY…PRDRRTEDYI (242 aa)) enclose the ABC transporter domain. 39–46 (GPSGCGKS) lines the ATP pocket.

This sequence belongs to the ABC transporter superfamily. Phosphate importer (TC 3.A.1.7) family. In terms of assembly, the complex is composed of two ATP-binding proteins (PstB), two transmembrane proteins (PstC and PstA) and a solute-binding protein (PstS).

The protein localises to the cell membrane. The enzyme catalyses phosphate(out) + ATP + H2O = ADP + 2 phosphate(in) + H(+). Part of the ABC transporter complex PstSACB involved in phosphate import. Responsible for energy coupling to the transport system. This Carboxydothermus hydrogenoformans (strain ATCC BAA-161 / DSM 6008 / Z-2901) protein is Phosphate import ATP-binding protein PstB.